A 349-amino-acid chain; its full sequence is Glycine-rich cell wall structural protein (349 aa).

Positions 1–23 are cleaved as a signal peptide; it reads MGKVSFGFLGLMLVVVVIGVVEC.

It is found in the secreted. The protein localises to the cell wall. Its function is as follows. Responsible for plasticity of the cell wall. The chain is Glycine-rich cell wall structural protein from Arabidopsis thaliana (Mouse-ear cress).